We begin with the raw amino-acid sequence, 487 residues long: Glutamyl-tRNA(Gln) amidotransferase subunit A (487 aa).

Residues Lys79 and Ser154 each act as charge relay system in the active site. Catalysis depends on Ser178, which acts as the Acyl-ester intermediate.

It belongs to the amidase family. GatA subfamily. Heterotrimer of A, B and C subunits.

It carries out the reaction L-glutamyl-tRNA(Gln) + L-glutamine + ATP + H2O = L-glutaminyl-tRNA(Gln) + L-glutamate + ADP + phosphate + H(+). Allows the formation of correctly charged Gln-tRNA(Gln) through the transamidation of misacylated Glu-tRNA(Gln) in organisms which lack glutaminyl-tRNA synthetase. The reaction takes place in the presence of glutamine and ATP through an activated gamma-phospho-Glu-tRNA(Gln). The protein is Glutamyl-tRNA(Gln) amidotransferase subunit A of Heliobacterium modesticaldum (strain ATCC 51547 / Ice1).